Here is a 451-residue protein sequence, read N- to C-terminus: Chromosomal replication initiator protein DnaA (451 aa).

The segment at 1–77 (MTENEQIFWN…EVYNAQISVD (77 aa)) is domain I, interacts with DnaA modulators. The domain II stretch occupies residues 77 to 110 (DYVFEEDLMIEQNQTKINQKPKQQALNSLPTVTS). The interval 111 to 329 (DLNSKYSFEN…GALKDISLVA (219 aa)) is domain III, AAA+ region. G155, G157, K158, and T159 together coordinate ATP. The tract at residues 330–451 (NFKQIDTITV…EIETIKNKIK (122 aa)) is domain IV, binds dsDNA.

This sequence belongs to the DnaA family. Oligomerizes as a right-handed, spiral filament on DNA at oriC.

Its subcellular location is the cytoplasm. In terms of biological role, plays an essential role in the initiation and regulation of chromosomal replication. ATP-DnaA binds to the origin of replication (oriC) to initiate formation of the DNA replication initiation complex once per cell cycle. Binds the DnaA box (a 9 base pair repeat at the origin) and separates the double-stranded (ds)DNA. Forms a right-handed helical filament on oriC DNA; dsDNA binds to the exterior of the filament while single-stranded (ss)DNA is stabiized in the filament's interior. The ATP-DnaA-oriC complex binds and stabilizes one strand of the AT-rich DNA unwinding element (DUE), permitting loading of DNA polymerase. After initiation quickly degrades to an ADP-DnaA complex that is not apt for DNA replication. Binds acidic phospholipids. Functionally, the half-life of ATP-DnaA is 12 minutes at 37 degrees Celsius, in E.coli the half-life is about 41 minutes. This is Chromosomal replication initiator protein DnaA from Streptococcus pyogenes serotype M1.